The primary structure comprises 120 residues: uncharacterized protein (120 aa).

Residues 1 to 27 (MPKIGVSLIVLIMLIIFLAGCNKNEQN) form the signal peptide.

This is an uncharacterized protein from Bacillus subtilis (strain 168).